We begin with the raw amino-acid sequence, 272 residues long: Putative phosphoenolpyruvate synthase regulatory protein (272 aa).

An ADP-binding site is contributed by 152 to 159 (GVSRSGKT).

The protein belongs to the pyruvate, phosphate/water dikinase regulatory protein family. PSRP subfamily.

It carries out the reaction [pyruvate, water dikinase] + ADP = [pyruvate, water dikinase]-phosphate + AMP + H(+). The enzyme catalyses [pyruvate, water dikinase]-phosphate + phosphate + H(+) = [pyruvate, water dikinase] + diphosphate. Its function is as follows. Bifunctional serine/threonine kinase and phosphorylase involved in the regulation of the phosphoenolpyruvate synthase (PEPS) by catalyzing its phosphorylation/dephosphorylation. This chain is Putative phosphoenolpyruvate synthase regulatory protein, found in Hahella chejuensis (strain KCTC 2396).